Consider the following 307-residue polypeptide: Ribosomal RNA small subunit methyltransferase H (307 aa).

Residues 32–34 (GGH), Asp52, Phe78, Asp100, and Gln107 each bind S-adenosyl-L-methionine.

Belongs to the methyltransferase superfamily. RsmH family.

The protein localises to the cytoplasm. It carries out the reaction cytidine(1402) in 16S rRNA + S-adenosyl-L-methionine = N(4)-methylcytidine(1402) in 16S rRNA + S-adenosyl-L-homocysteine + H(+). Specifically methylates the N4 position of cytidine in position 1402 (C1402) of 16S rRNA. In Coxiella burnetii (strain Dugway 5J108-111), this protein is Ribosomal RNA small subunit methyltransferase H.